We begin with the raw amino-acid sequence, 103 residues long: MNSTFNQTDSGIFSNRTEENLLCCNFSSVVTDNGFAAAAPDERSLFIMRIVQIAVMCVLSLTVVFGIFFLGCNLLIKSEGMINFLVTDRRPSKEVEAVIVGAY.

Residues 50–70 traverse the membrane as a helical segment; the sequence is IVQIAVMCVLSLTVVFGIFFL.

It belongs to the reprimo family.

Its subcellular location is the cytoplasm. The protein resides in the membrane. Its function is as follows. May be involved in the regulation of p53-dependent G2 arrest of the cell cycle. In Danio rerio (Zebrafish), this protein is Protein reprimo A.